Here is a 266-residue protein sequence, read N- to C-terminus: UPF0354 protein lmo1608 (266 aa).

The protein belongs to the UPF0354 family.

The chain is UPF0354 protein lmo1608 from Listeria monocytogenes serovar 1/2a (strain ATCC BAA-679 / EGD-e).